Here is a 120-residue protein sequence, read N- to C-terminus: Holo-[acyl-carrier-protein] synthase (120 aa).

Mg(2+) is bound by residues aspartate 8 and glutamate 58.

The protein belongs to the P-Pant transferase superfamily. AcpS family. The cofactor is Mg(2+).

The protein resides in the cytoplasm. The enzyme catalyses apo-[ACP] + CoA = holo-[ACP] + adenosine 3',5'-bisphosphate + H(+). Its function is as follows. Transfers the 4'-phosphopantetheine moiety from coenzyme A to a Ser of acyl-carrier-protein. The polypeptide is Holo-[acyl-carrier-protein] synthase (Anoxybacillus flavithermus (strain DSM 21510 / WK1)).